The following is a 2389-amino-acid chain: MPSATPSLDVPIAVVGLACRFPGDASSPSKFWDMVKNGRDAYSPTSSRWNSDAFYHPVNGKLNSLPTKGGHFLKEDPYVFDASFFNITAAEAIALDPKQRMALEVAYEAFENANMPLQQISGTQTACYIGSGPSDYRGSVERDFLHNPKYHLLGTGDEMISNRISHFFDIHGPSATIQTACSSSLMATHLACQSLKSGESDMAVTGGVSLMLTPDFTTHLNNLTFLNPQGRSKAFGESAGGYGRGEGCGIIILKRLDRAIQDGDSIRAVIRATGANSDGFTQGITMPSYEAQAALIKYVYESHGLDYDSTQYVEAHGTGTKVGDPIEMKAIYNTIGKGSSKPRKLYVGSVKPNIGHLESAAGVSGIIKGILAMEHNLIPPNIHFTKGNPNIPFHEWNVAVPLKPTAWPVSQTKRMSVSGFGMGGTNGHAVLESFNPSRLADAAVKHGDLTRFQKVRNKKRLFVFSSHDQAGFKRNADALVHHIENLGSAASSSEFLANLAHTLSGAKSSLSWRATCLAENTTEICDYLSNKPGDGAFRATSIENTTPRIGFVFTGQGAQWARMGVEMLDRQVFRDSIEQSATYLRDMGCLWDPIAELEKAQAESRLSYPEISQPICSVLQIALVDELQSWGVVPSRVVGHSSGEIAAAYSIGALSHRDAVAAAYFRGIAATKLQTDAPDLKGGMMAVGCSRDEADDVIEQSNLSGTAVVACVNSPSSVTLSGDVDSLEQLRAIFDDRKIFARRLKVEMAYHSRHMNRVFGTYSASIADLEPITQEETNEDGDFQIQTMVSSVTGQEVASELLGPYYWVRNLISPVLFSDAVKELVSPDDYDENKGSSSAVDLLIEIGPHSALSGPVEQILNHHGIRNVGYKSMLIRGRNAVETSLELASELYLDGIPLDISKVNGDLKVRRLTDLPPYQWNHSKVFRHENRIQTELMTRRFPSRSLIGAQVPMMDESQHVWRNFLRLADEPWLRGHKIGSTVLFPAAGLVSMAIEAARQLVEPGKTARSLRFREVSFSAAMALSEDVATEVILHMRPHLIATSGSTPSSWWELTISSCVGTSQLRDNCRGLITIDYADTTSEQMAKENANFENFMISEYYRVHNGCPDICSKEDFYGQFEKITWSYGEAFQGVENVHPGDGESTYDVRLVDIGETFSKDQSDRPFLIHAGTLDSILQGCLGSTYKNGRFETSKPVLPTFIGEMEISLDIPGDVGYVMPGLCESKRHGFKELSSNINIFDTGLSKVILSVVGYRVSELENDTEAQDTQQLEVDPADITSVVRWNCSVAIATQEELQKLMLASAPEARVLELVLLHIHNNPSATVIELTREIEPTNHTVMSQLPNGTVQSNQLHYAAISVETPLEGSTFNALSSVNSFYLGESDDSSRRGVTTADLLIVPQAVSDCENIENLLDRLITLGKPDAALILESQKSFDQLASILKTKGFQCVLEVQRSIALFKRQISQPTNGLPNCTSATRDFTIVDSLAPTEDTNAFSHNLRATLANQGYTVCVATWTEISACTETELEGKTIISLMELNKPMLSSLSESDFHDFRKLVLSSERLLWVNAGDDPSMGMIDGIRRTMRSEVAGIKFQVLRLSSLKTALQCGPSLVSRILTTESQDDEYRERNGMLEVARIYNNPEINADVRHCLTDSFRVQRLADQVKPLRLTIGKPGLLDTLAFIEDDRMKTALGETEIQVDIKATGINFKDIMAAMGLVGVSLIGQEASGIVTATGSAAASRFKPGDRVTLLWEGMHATKLQLDHRLAVHIPDSMSFEEASALPMVHVTAYHALINIAKLRRGQSILVHAAAGGVGQAALQLATYLGLTVYATVGSDDKRSLLMTKYNIPDAHIFCSRDASFLKAIKRVTGGHGVDCVLNSLSGELLRVSWACLAPFGTFVEIGLRDITNNMRLDMRPFSQSTTFAFINIANFFCAESLDALGNIISDTFDLVHQGVLRSPYPLTVYPVSELGTAFRTMQQGKHRGKLVLSFEGNAQVPVLCKAKDALHLKPDATYLFVGGLGGLGRSLAQEFIACGARHIAFVSRSGDTSKKAKATVDHLTALGAVVKAYQADIANEDAFLSAMQQCAADLPPIAGVLQMAMLLRDTLFEKMSYEDWTGPTRPKIQGTLSLHRYFSATRPLDFFLICSSISGIFGYAGQTAYAAANTFQDALAQHRRNQGLKAVAVDLGIMRDVGILAEQGTTGKLALWEAVLGIREKAFHALMKSIINRECKGEACPAQICTGLGTADVMKKFGLERPEHFADPRFGPLDVLNIDATSSPNADDSAVVSSPSTRLASASTFQEAVSIITDALVHKTAEILLMPVSEVDPSRPMYRYGVDSLVALEVRNWIARELQANMALLEILTAVPMREFAEKIAEKSKLVTMGNGER.

The Ketosynthase family 3 (KS3) domain occupies 9–433 (DVPIAVVGLA…GTNGHAVLES (425 aa)). Residues Cys181, His316, and His356 each act as for beta-ketoacyl synthase activity in the active site. Positions 551–861 (FVFTGQGAQW…LSGPVEQILN (311 aa)) are malonyl-CoA:ACP transacylase (MAT) domain. The For malonyltransferase activity role is filled by Ser641. The N-terminal hotdog fold stretch occupies residues 944 to 1079 (RSLIGAQVPM…GLITIDYADT (136 aa)). Positions 944–1263 (RSLIGAQVPM…VSELENDTEA (320 aa)) constitute a PKS/mFAS DH domain. A dehydratase (DH) domain region spans residues 946-1262 (LIGAQVPMMD…RVSELENDTE (317 aa)). The Proton acceptor; for dehydratase activity role is filled by His976. Residues 1107 to 1263 (PDICSKEDFY…VSELENDTEA (157 aa)) form a C-terminal hotdog fold region. Residue Asp1173 is the Proton donor; for dehydratase activity of the active site. Positions 1673–1987 (GLLDTLAFIE…QGKHRGKLVL (315 aa)) are enoylreductase (ER) domain. The tract at residues 2011 to 2191 (ATYLFVGGLG…VAVDLGIMRD (181 aa)) is catalytic ketoreductase (KRc) domain. The 78-residue stretch at 2302–2379 (EAVSIITDAL…EFAEKIAEKS (78 aa)) folds into the Carrier domain. Residue Ser2339 is modified to O-(pantetheine 4'-phosphoryl)serine.

Its pathway is mycotoxin biosynthesis. In terms of biological role, highly reducing polyketide synthase; part of the gene cluster that mediates the biosynthesis of 10,11-dehydrocurvularin, a prevalent fungal phytotoxin with heat shock response and immune-modulatory activities. The highly reducing polyketide synthase Dhc3 is responsible for biosynthesis up to the tetraketide stage. The non-reducing polyketide synthase Dhc5 then conducts four additional chain extension cycles, producing the unreduced part of the nascent octaketide from C-1 to C-8 in 10,11-dehydrocurvularin. This is Highly reducing polyketide synthase Dhc3 (Dhc3) from Alternaria cinerariae.